Here is a 239-residue protein sequence, read N- to C-terminus: Ribosomal RNA large subunit methyltransferase E (239 aa).

The disordered stretch occupies residues methionine 1–lysine 20. Over residues threonine 11–lysine 20 the composition is skewed to basic residues. S-adenosyl-L-methionine-binding residues include glycine 81, tryptophan 83, aspartate 104, aspartate 120, and aspartate 144. Lysine 184 acts as the Proton acceptor in catalysis.

Belongs to the class I-like SAM-binding methyltransferase superfamily. RNA methyltransferase RlmE family.

The protein localises to the cytoplasm. The catalysed reaction is uridine(2552) in 23S rRNA + S-adenosyl-L-methionine = 2'-O-methyluridine(2552) in 23S rRNA + S-adenosyl-L-homocysteine + H(+). In terms of biological role, specifically methylates the uridine in position 2552 of 23S rRNA at the 2'-O position of the ribose in the fully assembled 50S ribosomal subunit. This Rhizobium johnstonii (strain DSM 114642 / LMG 32736 / 3841) (Rhizobium leguminosarum bv. viciae) protein is Ribosomal RNA large subunit methyltransferase E.